The chain runs to 311 residues: Chalcone synthase 4 (311 aa).

Residue Cys164 is part of the active site.

The protein belongs to the thiolase-like superfamily. Chalcone/stilbene synthases family.

The catalysed reaction is (E)-4-coumaroyl-CoA + 3 malonyl-CoA + 3 H(+) = 2',4,4',6'-tetrahydroxychalcone + 3 CO2 + 4 CoA. Its pathway is secondary metabolite biosynthesis; flavonoid biosynthesis. Its function is as follows. The primary product of this enzyme is 4,2',4',6'-tetrahydroxychalcone (also termed naringenin-chalcone or chalcone) which can under specific conditions spontaneously isomerize into naringenin. The polypeptide is Chalcone synthase 4 (CHS4) (Trifolium subterraneum (Subterranean clover)).